The chain runs to 919 residues: Bifunctional uridylyltransferase/uridylyl-removing enzyme (919 aa).

The interval 1 to 373 (MTDPKVPRQR…LAGFNAKSRM (373 aa)) is uridylyltransferase. Residues 374 to 727 (LKGYTVFGGK…CEFDEERGAT (354 aa)) are uridylyl-removing. The HD domain maps to 489–611 (VDEHTIRAIG…VQSLERLRHL (123 aa)). ACT domains follow at residues 728–811 (LVTV…LAKR) and 839–919 (VIEV…LEPA).

Belongs to the GlnD family. Mg(2+) is required as a cofactor.

The catalysed reaction is [protein-PII]-L-tyrosine + UTP = [protein-PII]-uridylyl-L-tyrosine + diphosphate. It carries out the reaction [protein-PII]-uridylyl-L-tyrosine + H2O = [protein-PII]-L-tyrosine + UMP + H(+). Its activity is regulated as follows. Uridylyltransferase (UTase) activity is inhibited by glutamine, while glutamine activates uridylyl-removing (UR) activity. In terms of biological role, modifies, by uridylylation and deuridylylation, the PII regulatory proteins (GlnB and homologs), in response to the nitrogen status of the cell that GlnD senses through the glutamine level. Under low glutamine levels, catalyzes the conversion of the PII proteins and UTP to PII-UMP and PPi, while under higher glutamine levels, GlnD hydrolyzes PII-UMP to PII and UMP (deuridylylation). Thus, controls uridylylation state and activity of the PII proteins, and plays an important role in the regulation of nitrogen assimilation and metabolism. This Erythrobacter litoralis (strain HTCC2594) protein is Bifunctional uridylyltransferase/uridylyl-removing enzyme.